The chain runs to 702 residues: Dynein axonemal intermediate chain 1 (702 aa).

The interval 1-58 (MLPASSKMPHKQPPPPRKQSISMGRGARKRDEDSGTEVGEGTDEWVQSKATVKPPDQL) is disordered. Phosphoserine occurs at positions 134 and 137. 5 WD repeats span residues 383-423 (SSES…SQPS), 432-475 (KHTD…LVHT), 540-580 (AHNM…PMFI), 582-622 (DLNS…YEAI), and 630-669 (KKKNKLTHVQFNPIHPIIIVGDDRGHVTCLKLSPNLRKMP).

It belongs to the dynein intermediate chain family. Consists of at least two heavy chains and a number of intermediate and light chains. Interacts with BICD2. Interacts with CFAP45 and CFAP52. Interacts with CFAP53.

The protein resides in the cytoplasm. Its subcellular location is the cytoskeleton. The protein localises to the cilium axoneme. Part of the dynein complex of respiratory cilia. The protein is Dynein axonemal intermediate chain 1 (DNAI1) of Bos taurus (Bovine).